The primary structure comprises 463 residues: POU domain, class 2, transcription factor 2 (463 aa).

Disordered stretches follow at residues M1–L87, Q159–S182, S259–R282, P341–A376, and T393–P463. Residues R12–G37 show a composition bias toward basic and acidic residues. Positions N41–S60 are enriched in polar residues. The span at A75–P85 shows a compositional bias: pro residues. The POU-specific domain occupies E179 to E253. Residues S259–L272 show a composition bias toward low complexity. The homeobox DNA-binding region spans R281–N340. A leucine-zipper region spans residues L373–L394. A compositionally biased stretch (gly residues) spans A400 to A409.

Belongs to the POU transcription factor family. Class-2 subfamily. In terms of assembly, interacts with NR3C1, AR and PGR. Interacts with POU2AF1; the interaction increases POU2F2 transactivation activity. As to expression, highest in B cells, but also present in brain (neuronal and glial cells), intestine, kidney, and testes. Expressed at higher levels in B-cells than in neuronal cells. In terms of tissue distribution, expressed in neuronal cell lines and brain, but not dorsal root ganglia. As to expression, expressed at lower levels in neuronal cells than in B cells. Expressed in neuronal cell lines, and at lower levels in neuroblastoma and dorsal root ganglia. In terms of tissue distribution, widely expressed in the developing nervous system but expression is confined to very specific regions in the adult brain, it is expressed at a lower level in B cells. As to expression, either absent in, or expressed at very low levels in neuronal cells and brain. Expressed in all tissues tested: mammary gland, liver, spleen, lung, kidney intestine, uterus and ovary of a virgin mouse. Levels of isoform OCT2.7 are highest in spleen and lung. In mammary gland, expression is localized to the alveolus epithelial cells.

Its subcellular location is the cytoplasm. The protein localises to the nucleus. With respect to regulation, transactivation activity is enhanced by transcriptional coactivator POU2AF1. Transcription factor that specifically binds to the octamer motif (5'-ATTTGCAT-3'). Regulates IL6 expression in B cells with POU2AF1. Regulates transcription in a number of tissues in addition to activating immunoglobulin gene expression. Modulates transcription transactivation by NR3C1, AR and PGR. Functionally, activates octamer-containing promoters. In terms of biological role, represses some promoters and activate others. Its function is as follows. Represses some promoters and activate others. Activates the U2 small nuclear RNA (snRNA) promoter. Unable to bind to the octamer motif, but can still activate the beta-casein gene promoter at low levels. The polypeptide is POU domain, class 2, transcription factor 2 (Mus musculus (Mouse)).